Here is a 158-residue protein sequence, read N- to C-terminus: NAD(P)H-quinone oxidoreductase subunit J, chloroplastic (158 aa).

This sequence belongs to the complex I 30 kDa subunit family. As to quaternary structure, NDH is composed of at least 16 different subunits, 5 of which are encoded in the nucleus.

The protein resides in the plastid. The protein localises to the chloroplast thylakoid membrane. The catalysed reaction is a plastoquinone + NADH + (n+1) H(+)(in) = a plastoquinol + NAD(+) + n H(+)(out). It carries out the reaction a plastoquinone + NADPH + (n+1) H(+)(in) = a plastoquinol + NADP(+) + n H(+)(out). In terms of biological role, NDH shuttles electrons from NAD(P)H:plastoquinone, via FMN and iron-sulfur (Fe-S) centers, to quinones in the photosynthetic chain and possibly in a chloroplast respiratory chain. The immediate electron acceptor for the enzyme in this species is believed to be plastoquinone. Couples the redox reaction to proton translocation, and thus conserves the redox energy in a proton gradient. The polypeptide is NAD(P)H-quinone oxidoreductase subunit J, chloroplastic (Draba nemorosa (Woodland whitlowgrass)).